The primary structure comprises 241 residues: Urease accessory protein UreF 1 (241 aa).

The protein belongs to the UreF family. In terms of assembly, ureD, UreF and UreG form a complex that acts as a GTP-hydrolysis-dependent molecular chaperone, activating the urease apoprotein by helping to assemble the nickel containing metallocenter of UreC. The UreE protein probably delivers the nickel.

It localises to the cytoplasm. Required for maturation of urease via the functional incorporation of the urease nickel metallocenter. The polypeptide is Urease accessory protein UreF 1 (Brucella melitensis biotype 1 (strain ATCC 23456 / CCUG 17765 / NCTC 10094 / 16M)).